The primary structure comprises 268 residues: Tropinone reductase homolog (268 aa).

21 to 45 (LVTGGTRGIGYAIVEELANFGAEVY) provides a ligand contact to NADP(+). S154 lines the substrate pocket. The Proton acceptor role is filled by Y167.

It belongs to the short-chain dehydrogenases/reductases (SDR) family.

The sequence is that of Tropinone reductase homolog from Datura stramonium (Jimsonweed).